The sequence spans 189 residues: Coatomer subunit zeta (189 aa).

The protein belongs to the adaptor complexes small subunit family. As to quaternary structure, oligomeric complex that consists of at least the alpha, beta, beta', gamma, delta, epsilon and zeta subunits.

Its subcellular location is the cytoplasm. The protein resides in the golgi apparatus membrane. It is found in the cytoplasmic vesicle. It localises to the COPI-coated vesicle membrane. Its function is as follows. The coatomer is a cytosolic protein complex that binds to dilysine motifs and reversibly associates with Golgi non-clathrin-coated vesicles, which further mediate biosynthetic protein transport from the ER, via the Golgi up to the trans Golgi network. Coatomer complex is required for budding from Golgi membranes, and is essential for the retrograde Golgi-to-ER transport of dilysine-tagged proteins. The zeta subunit may be involved in regulating the coat assembly and, hence, the rate of biosynthetic protein transport due to its association-dissociation properties with the coatomer complex. This chain is Coatomer subunit zeta (RET3), found in Saccharomyces cerevisiae (strain ATCC 204508 / S288c) (Baker's yeast).